We begin with the raw amino-acid sequence, 96 residues long: Large ribosomal subunit protein eL14 (96 aa).

It belongs to the eukaryotic ribosomal protein eL14 family.

The polypeptide is Large ribosomal subunit protein eL14 (Saccharolobus islandicus (strain Y.N.15.51 / Yellowstone #2) (Sulfolobus islandicus)).